We begin with the raw amino-acid sequence, 556 residues long: Oxygen-dependent choline dehydrogenase (556 aa).

4–33 (DYIIIGAGSAGNVLATRLTEDPNTTVLLLE) is a binding site for FAD. The active-site Proton acceptor is the histidine 473.

Belongs to the GMC oxidoreductase family. It depends on FAD as a cofactor.

It carries out the reaction choline + A = betaine aldehyde + AH2. The catalysed reaction is betaine aldehyde + NAD(+) + H2O = glycine betaine + NADH + 2 H(+). The protein operates within amine and polyamine biosynthesis; betaine biosynthesis via choline pathway; betaine aldehyde from choline (cytochrome c reductase route): step 1/1. Its function is as follows. Involved in the biosynthesis of the osmoprotectant glycine betaine. Catalyzes the oxidation of choline to betaine aldehyde and betaine aldehyde to glycine betaine at the same rate. This Escherichia coli O6:K15:H31 (strain 536 / UPEC) protein is Oxygen-dependent choline dehydrogenase.